A 100-amino-acid chain; its full sequence is uncharacterized protein (100 aa).

The protein resides in the virion. This is an uncharacterized protein from Acanthamoeba polyphaga mimivirus (APMV).